A 1571-amino-acid chain; its full sequence is Pentafunctional AROM polypeptide (1571 aa).

The interval 1–384 (MEQPTTIQIL…HEQKASVVSN (384 aa)) is 3-dehydroquinate synthase. Residues 44-46 (DTN), 81-84 (ESSK), 114-116 (GGV), and Asp119 each bind NAD(+). Arg130 lines the 7-phospho-2-dehydro-3-deoxy-D-arabino-heptonate pocket. 139–140 (TT) contacts NAD(+). The 7-phospho-2-dehydro-3-deoxy-D-arabino-heptonate site is built by Asp146 and Lys152. NAD(+) is bound at residue Lys161. A 7-phospho-2-dehydro-3-deoxy-D-arabino-heptonate-binding site is contributed by Asn162. Residues 179-182 (FLNT) and Asn190 contribute to the NAD(+) site. Glu194 contacts Zn(2+). 7-phospho-2-dehydro-3-deoxy-D-arabino-heptonate contacts are provided by residues 194–197 (EVIK) and Lys250. Residue Glu260 is the Proton acceptor; for 3-dehydroquinate synthase activity of the active site. 7-phospho-2-dehydro-3-deoxy-D-arabino-heptonate is bound by residues 264–268 (RNLLN) and His271. His271 lines the Zn(2+) pocket. Residue His275 is the Proton acceptor; for 3-dehydroquinate synthase activity of the active site. Residues His287 and Lys356 each contribute to the 7-phospho-2-dehydro-3-deoxy-D-arabino-heptonate site. His287 is a binding site for Zn(2+). The EPSP synthase stretch occupies residues 397–843 (VLPGIPKPLN…WDALAQTFKV (447 aa)). Cys825 functions as the For EPSP synthase activity in the catalytic mechanism. A shikimate kinase region spans residues 866 to 1057 (ASIFIIGMRG…KKKDHSFFVS (192 aa)). 872–879 (GMRGAGKT) contacts ATP. Residues 1058–1278 (LTLPDLQLSA…AAPGQVSAKD (221 aa)) are 3-dehydroquinase. His1181 acts as the Proton acceptor; for 3-dehydroquinate dehydratase activity in catalysis. Catalysis depends on Lys1209, which acts as the Schiff-base intermediate with substrate; for 3-dehydroquinate dehydratase activity. The interval 1291–1571 (AKKFALFGKP…EDARAAVMNI (281 aa)) is shikimate dehydrogenase.

The protein in the N-terminal section; belongs to the sugar phosphate cyclases superfamily. Dehydroquinate synthase family. It in the 2nd section; belongs to the EPSP synthase family. This sequence in the 3rd section; belongs to the shikimate kinase family. In the 4th section; belongs to the type-I 3-dehydroquinase family. The protein in the C-terminal section; belongs to the shikimate dehydrogenase family. As to quaternary structure, homodimer. It depends on Zn(2+) as a cofactor.

The protein resides in the cytoplasm. The catalysed reaction is 7-phospho-2-dehydro-3-deoxy-D-arabino-heptonate = 3-dehydroquinate + phosphate. It catalyses the reaction 3-dehydroquinate = 3-dehydroshikimate + H2O. It carries out the reaction shikimate + NADP(+) = 3-dehydroshikimate + NADPH + H(+). The enzyme catalyses shikimate + ATP = 3-phosphoshikimate + ADP + H(+). The catalysed reaction is 3-phosphoshikimate + phosphoenolpyruvate = 5-O-(1-carboxyvinyl)-3-phosphoshikimate + phosphate. It participates in metabolic intermediate biosynthesis; chorismate biosynthesis; chorismate from D-erythrose 4-phosphate and phosphoenolpyruvate: step 2/7. Its pathway is metabolic intermediate biosynthesis; chorismate biosynthesis; chorismate from D-erythrose 4-phosphate and phosphoenolpyruvate: step 3/7. The protein operates within metabolic intermediate biosynthesis; chorismate biosynthesis; chorismate from D-erythrose 4-phosphate and phosphoenolpyruvate: step 4/7. It functions in the pathway metabolic intermediate biosynthesis; chorismate biosynthesis; chorismate from D-erythrose 4-phosphate and phosphoenolpyruvate: step 5/7. It participates in metabolic intermediate biosynthesis; chorismate biosynthesis; chorismate from D-erythrose 4-phosphate and phosphoenolpyruvate: step 6/7. Its function is as follows. The AROM polypeptide catalyzes 5 consecutive enzymatic reactions in prechorismate polyaromatic amino acid biosynthesis. This is Pentafunctional AROM polypeptide from Arthroderma otae (strain ATCC MYA-4605 / CBS 113480) (Microsporum canis).